A 294-amino-acid chain; its full sequence is Undecaprenyl-diphosphatase (294 aa).

6 consecutive transmembrane segments (helical) span residues 39–59 (PGAA…ILYF), 93–113 (ATLG…GFTL), 123–143 (NLWI…MVDA), 198–218 (SFLM…IKAV), 232–252 (PTLV…IGFL), and 268–288 (IGLA…AIDP).

It belongs to the UppP family.

It localises to the cell membrane. The enzyme catalyses di-trans,octa-cis-undecaprenyl diphosphate + H2O = di-trans,octa-cis-undecaprenyl phosphate + phosphate + H(+). Catalyzes the dephosphorylation of undecaprenyl diphosphate (UPP). Confers resistance to bacitracin. This is Undecaprenyl-diphosphatase from Bifidobacterium longum (strain DJO10A).